Reading from the N-terminus, the 644-residue chain is MGIQILPPQLANQIAAGEVVERPASVVKELVENSLDAGATRIDIEIDKGGSKLIKIRDNGSGIPKDELALALSRHATSKLHSLDDLEAILSFGFRGEALASISSVSRLTLTSRTAEQTEAWQAYAEGVDMAVKVMPAAHPVGSTIEVVDLFFNTPARRRFLKSDKTEFTHIDEWLKRIALVRGDIHFTLTHNGKTVRNYRPAMNEPQYLQRLTQVAGRQFADEALRVECQHDDLRLSGYLQSPWSTVLTDTHYFYVNGRLVRDRLVNHAVRQAFAQKAEVEQPGYVLMLDIDPHQVDVNVHPAKHEVRFHQSRYVHDYILQALQSALEEAGELGFEHPFEPSSPQVRDEVSLSESGTQTQTEHHAFELQSPESKTHSTWNEASRVDTSRVEISRDSQLTERTRDIASARPYSGVQSNAYGSMAVPRESRSGPTGESRARAELPSKAAIASYGELLQTPSYSVQDKPYQPVLAMPAMLNGQYWVLAQGQNLSLLPIQSVALATRSHEIETKLATGLIGQPLLMPVSIAADTDWPALLEEHETLIRQLGLELTIRYQQLIIKKVPPYLRDSQLAKVIPEWLQSLRFEAPAPNALAVWLAEQSLTGFTSAADIWAAYSQLTEEKRQQIADKAVSLPWQSWLEEQAIE.

Disordered regions lie at residues 353 to 399 (SESG…SQLT) and 420 to 440 (GSMA…RARA). A compositionally biased stretch (polar residues) spans 370 to 381 (SPESKTHSTWNE). The segment covering 383–399 (SRVDTSRVEISRDSQLT) has biased composition (basic and acidic residues).

The protein belongs to the DNA mismatch repair MutL/HexB family.

This protein is involved in the repair of mismatches in DNA. It is required for dam-dependent methyl-directed DNA mismatch repair. May act as a 'molecular matchmaker', a protein that promotes the formation of a stable complex between two or more DNA-binding proteins in an ATP-dependent manner without itself being part of a final effector complex. This Shewanella sp. (strain MR-4) protein is DNA mismatch repair protein MutL.